Here is an 853-residue protein sequence, read N- to C-terminus: DNA mismatch repair protein MutS (853 aa).

Position 614-621 (614-621 (GPNMGGKS)) interacts with ATP.

The protein belongs to the DNA mismatch repair MutS family.

Its function is as follows. This protein is involved in the repair of mismatches in DNA. It is possible that it carries out the mismatch recognition step. This protein has a weak ATPase activity. The sequence is that of DNA mismatch repair protein MutS from Escherichia coli O127:H6 (strain E2348/69 / EPEC).